Reading from the N-terminus, the 126-residue chain is Large ribosomal subunit protein uL29 (126 aa).

The protein belongs to the universal ribosomal protein uL29 family.

This Dictyostelium discoideum (Social amoeba) protein is Large ribosomal subunit protein uL29 (rpl35).